The sequence spans 289 residues: Fumagillin beta-trans-bergamotene synthase af520 (289 aa).

6 helical membrane-spanning segments follow: residues 35–55 (AVAL…GFLW), 95–115 (TLLY…TNTI), 142–162 (LIGA…FDGG), 165–185 (LHGL…TTGH), 222–242 (AWTI…LAYV), and 262–282 (YVSY…PIFP).

Belongs to the paxB family.

The protein resides in the membrane. It catalyses the reaction (2E,6E)-farnesyl diphosphate = (+)-exo-beta-bergamotene + diphosphate. Its pathway is secondary metabolite biosynthesis; terpenoid biosynthesis. In terms of biological role, beta-trans-bergamotene synthase; part of the gene cluster that mediates the biosynthesis of fumagillin, a meroterpenoid that has numerous biological activities including irreversible inhibition of human type 2 methionine aminopeptidase (METAP2). Within the pathway, the membrane-bound fumagillin beta-trans-bergamotene synthase af520 converts farnesyl pyrophosphate (FPP) to beta-trans-bergamotene. The pathway begins with the conversion of FPP to beta-trans-bergamotene by af520. The multifunctional cytochrome P450 monooxygenase af510 then converts beta-trans-bergamotene into 5-keto-demethoxyfumagillol via several oxydation steps. 5-keto-demethoxyfumagillol is then subjected to successive C-6 hydroxylation and O-methylation by the dioxygenase af480 and O-methyltransferase af390-400, respectively, to yield 5-keto-fumagillol, which is then stereoselectively reduced by the keto-reductase af490 to 5R-hydroxy-seco-sesquiterpene. The next step is the polyketide transferase af380-catalyzed transfer of a dodecapentaenoyl group synthesized by the polyketide synthase af370 onto 5R-hydroxy-seco-sesquiterpene which leads to the production of prefumagillin. Finally, oxidative cleavage by the monooxygenase af470 converts prefumagillin to fumagillin. The chain is Fumagillin beta-trans-bergamotene synthase af520 from Aspergillus fumigatus (strain ATCC MYA-4609 / CBS 101355 / FGSC A1100 / Af293) (Neosartorya fumigata).